We begin with the raw amino-acid sequence, 187 residues long: Accessory gene regulator protein B (187 aa).

Helical transmembrane passes span 49 to 69, 82 to 102, 106 to 126, 144 to 164, and 166 to 186; these read ISIF…YMLI, ILCY…LINI, FTYL…YAPA, VSII…PFYA, and FMLL…FPKE.

It belongs to the AgrB family.

It localises to the cell membrane. Functionally, essential for the production of a quorum sensing system signal molecule, the autoinducing peptide (AIP). This quorum sensing system is responsible for the regulation of the expression of virulence factor genes. Involved in the proteolytic processing of AgrD, the precursor of AIP. The protein is Accessory gene regulator protein B of Staphylococcus aureus (strain bovine RF122 / ET3-1).